We begin with the raw amino-acid sequence, 845 residues long: SLIT and NTRK-like protein 2 (845 aa).

The N-terminal stretch at 1–21 (MLSGVWFLSVLTVAGILQTES) is a signal peptide. Topologically, residues 22–621 (RKTAKDICKI…LHTEVPLSVL (600 aa)) are extracellular. 2 disulfides stabilise this stretch: C29/C35 and C33/C46. LRR repeat units lie at residues 63–84 (RIYQLFLNGNLLTRLYPNEFVN), 87–108 (NAVTLHLGNNGLQEIRTGAFSG), 111–132 (TLKRLHLNNNKLEILREDTFLG), 135–156 (SLEYLQADYNYISAIEAGAFSK), 159–180 (KLKVLILNDNLLLSLPSNVFRF), and 182–203 (LLTHLDLRGNRLKVMPFAGVLE). N-linked (GlcNAc...) asparagine glycosylation is present at N84. Residues 167–215 (DNLLLSLPSNVFRFVLLTHLDLRGNRLKVMPFAGVLEHIGGIMEIQLEE) form a required for interaction with PTPRD region. In terms of domain architecture, LRRCT 1 spans 216–265 (NPWNCTCDLLPLKAWLDTITVFVGEIVCETPFRLHGKDVTQLTRQDLCPR). Intrachain disulfides connect C220–C243 and C222–C263. A disordered region spans residues 263–321 (CPRKSASDSSQRGSHADTHVQRLSPTMNPALNPTRAPKASRPPKMRNRPTPRVTVSKDR). Over residues 283–293 (QRLSPTMNPAL) the composition is skewed to polar residues. The region spanning 331 to 373 (QTKSPVPLTCPSSCVCTSQSSDNGLNVNCQERKFTNISDLQPK) is the LRRNT domain. LRR repeat units lie at residues 376–397 (SPKKLYLTGNYLQTVYKNDLLE), 400–421 (SLDLLHLGNNRIAVIQEGAFTN), 424–445 (SLRRLYLNGNYLEVLYPSMFDG), 448–469 (SLQYLYLEYNVIKEIKPLTFDA), 472–493 (NLQLLFLNNNLLRSLPDNIFGG), and 495–516 (ALTRLNLRNNHFSHLPVKGVLD). An N-linked (GlcNAc...) asparagine glycan is attached at N421. One can recognise an LRRCT 2 domain in the interval 529 to 580 (NPWDCTCDIMGLKDWTEHANSPVIINEVTCESPAKHAGEILKFLGREAICPD). Residues 622 to 642 (ILGLLVVFILSVCFGAGLFVF) form a helical membrane-spanning segment. At 643–845 (VLKRRKGVPS…LEKQTAISQL (203 aa)) the chain is on the cytoplasmic side. Phosphotyrosine is present on Y756.

It belongs to the SLITRK family. In terms of assembly, interacts with PTPRD; this interaction is PTPRD splicing-dependent and may induce pre-synaptic differentiation. Interacts with NTRK2. As to expression, expressed predominantly in the cerebral cortex of the brain but also at low levels in the spinal cord and medulla. Also expressed in some astrocytic brain tumors such as astrocytomas, oligodendrogliomas, glioblastomas, gangliogliomas and primitive neuroectodermal tumors.

Its subcellular location is the membrane. The protein localises to the cell membrane. It localises to the cell projection. It is found in the dendrite. Its function is as follows. It is involved in synaptogenesis and promotes excitatory synapse differentiation. Suppresses neurite outgrowth. Involved in the negative regulation of NTRK2. This Homo sapiens (Human) protein is SLIT and NTRK-like protein 2 (SLITRK2).